We begin with the raw amino-acid sequence, 459 residues long: Eukaryotic translation initiation factor 3 subunit M (459 aa).

The PCI domain maps to 207-384 (LDWAQTHVVD…SEFLVHRATY (178 aa)). The interval 431–459 (AAAEGEKGDKNNKGPSERRRAPQEIAAAE) is disordered. Residues 434–452 (EGEKGDKNNKGPSERRRAP) show a composition bias toward basic and acidic residues.

Belongs to the eIF-3 subunit M family. In terms of assembly, component of the eukaryotic translation initiation factor 3 (eIF-3) complex.

The protein localises to the cytoplasm. Its function is as follows. Component of the eukaryotic translation initiation factor 3 (eIF-3) complex, which is involved in protein synthesis of a specialized repertoire of mRNAs and, together with other initiation factors, stimulates binding of mRNA and methionyl-tRNAi to the 40S ribosome. The eIF-3 complex specifically targets and initiates translation of a subset of mRNAs involved in cell proliferation. The chain is Eukaryotic translation initiation factor 3 subunit M from Emericella nidulans (strain FGSC A4 / ATCC 38163 / CBS 112.46 / NRRL 194 / M139) (Aspergillus nidulans).